The following is a 60-amino-acid chain: Large ribosomal subunit protein bL32 (60 aa).

A disordered region spans residues 1–60 (MAVQQNKKTPSKRGMHRSHDFLVAPQLSVEQTTGETHMRHHISPNGFYRGRKVLKTKNDE). Positions 49 to 60 (RGRKVLKTKNDE) are enriched in basic residues.

Belongs to the bacterial ribosomal protein bL32 family.

The protein is Large ribosomal subunit protein bL32 of Herminiimonas arsenicoxydans.